A 613-amino-acid polypeptide reads, in one-letter code: Na(+)/H(+) antiporter NhaA 1 (613 aa).

A disordered region spans residues 1–23; sequence MTEASARTIGPLPSRFSRDPKTP. Positions 1–408 are na(+)/H(+) antiporter NhaA; the sequence is MTEASARTIG…DPARQDEARV (408 aa). The next 11 helical transmembrane spans lie at 29–49, 81–101, 110–130, 138–158, 168–188, 191–211, 231–251, 300–320, 337–357, 377–397, and 408–428; these read AAAALLLAFTVLAILWANSPW, GLMAFFFFIVGLEVKSEFVIG, AVPVVAAIAGLIVPAVIFLTF, QAWGVVISTDTAFLVGALAVI, IFLLTLAVVDDVGALGAIALF, DDLKLAPLAVAALLIAALAMV, IALYLAHVHPTLAGVAVAVLI, AVGPYVSFVVLPIFALANAGV, WGIVAGLVVGKFVGITAATAL, GGAALSGIGFTISLFIVDVAI, and VGVLIASVLAFTLSWALFRIT. A Thioredoxin domain is found at 409 to 613; sequence GVLIASVLAF…SLIRALEAGR (205 aa).

The protein in the N-terminal section; belongs to the NhaA Na(+)/H(+) (TC 2.A.33) antiporter family.

The protein localises to the cell membrane. The enzyme catalyses Na(+)(in) + 2 H(+)(out) = Na(+)(out) + 2 H(+)(in). Its function is as follows. Na(+)/H(+) antiporter that extrudes sodium in exchange for external protons. The sequence is that of Na(+)/H(+) antiporter NhaA 1 from Mycobacterium sp. (strain KMS).